Here is a 302-residue protein sequence, read N- to C-terminus: Nucleotide-binding protein SE_0548 (302 aa).

18–25 serves as a coordination point for ATP; it reads GMSGAGKS. Position 69 to 72 (69 to 72) interacts with GTP; that stretch reads DLRG.

The protein belongs to the RapZ-like family.

In terms of biological role, displays ATPase and GTPase activities. The chain is Nucleotide-binding protein SE_0548 from Staphylococcus epidermidis (strain ATCC 12228 / FDA PCI 1200).